The sequence spans 126 residues: Aspartate 1-decarboxylase (126 aa).

The active-site Schiff-base intermediate with substrate; via pyruvic acid is the Ser25. A Pyruvic acid (Ser) modification is found at Ser25. Thr57 provides a ligand contact to substrate. Tyr58 (proton donor) is an active-site residue. 73–75 (GGA) provides a ligand contact to substrate.

It belongs to the PanD family. In terms of assembly, heterooctamer of four alpha and four beta subunits. It depends on pyruvate as a cofactor. In terms of processing, is synthesized initially as an inactive proenzyme, which is activated by self-cleavage at a specific serine bond to produce a beta-subunit with a hydroxyl group at its C-terminus and an alpha-subunit with a pyruvoyl group at its N-terminus.

It localises to the cytoplasm. The catalysed reaction is L-aspartate + H(+) = beta-alanine + CO2. It participates in cofactor biosynthesis; (R)-pantothenate biosynthesis; beta-alanine from L-aspartate: step 1/1. Its function is as follows. Catalyzes the pyruvoyl-dependent decarboxylation of aspartate to produce beta-alanine. The protein is Aspartate 1-decarboxylase of Acinetobacter baylyi (strain ATCC 33305 / BD413 / ADP1).